The following is a 136-amino-acid chain: Large ribosomal subunit protein uL16 (136 aa).

Belongs to the universal ribosomal protein uL16 family. In terms of assembly, part of the 50S ribosomal subunit.

Its function is as follows. Binds 23S rRNA and is also seen to make contacts with the A and possibly P site tRNAs. The protein is Large ribosomal subunit protein uL16 of Shewanella woodyi (strain ATCC 51908 / MS32).